A 334-amino-acid chain; its full sequence is MAFNLRNRNFLKLLDFSTKEIQFLIDLSADLKKAKYAGTEQKKLLGKNIALIFEKASTRTRCAFEVAAFDQGAQVTYIGPSGSQIGDKESMKDTARVLGRMYDGIQYRGFGQAIVEELGAFAGVPVWNGLTDEFHPTQILADFLTMLEHSQGKALADIQFAYLGDARNNVGNSLMVGAAKMGMDISLVGPQAYWPDEELVTACQAIAKQTGGKITLTENVAEGVQGCDFLYTDVWVSMGESPEAWDERVALMKPYQVNTNVLKQTGNPNVKFMHCLPAFHNDETTIGKQVADKFGMKGLEVTEEVFESEHSIVFDEAENRMHTIKAVMVATLGS.

Carbamoyl phosphate is bound by residues 57–60, Q84, R108, and 135–138; these read STRT and HPTQ. L-ornithine-binding positions include N169, D233, and 237 to 238; that span reads SM. Carbamoyl phosphate is bound by residues 275–276 and R320; that span reads CL.

The protein belongs to the aspartate/ornithine carbamoyltransferase superfamily. OTCase family.

The protein resides in the cytoplasm. It carries out the reaction carbamoyl phosphate + L-ornithine = L-citrulline + phosphate + H(+). Its pathway is amino-acid biosynthesis; L-arginine biosynthesis; L-arginine from L-ornithine and carbamoyl phosphate: step 1/3. Its function is as follows. Reversibly catalyzes the transfer of the carbamoyl group from carbamoyl phosphate (CP) to the N(epsilon) atom of ornithine (ORN) to produce L-citrulline. This Vibrio vulnificus (strain YJ016) protein is Ornithine carbamoyltransferase.